The primary structure comprises 195 residues: Probable DNA-directed RNA polymerase subunit delta (195 aa).

Positions 14–83 (LSMIEVARAI…GDNKWGLRSW (70 aa)) constitute an HTH HARE-type domain. Acidic residues-rich tracts occupy residues 120–138 (DSDAIDYNADDPEDEDAYE) and 145–195 (YDDE…TSEE). A disordered region spans residues 120-195 (DSDAIDYNAD…SDDDAETSEE (76 aa)).

Belongs to the RpoE family. In terms of assembly, RNAP is composed of a core of 2 alpha, a beta and a beta' subunits. The core is associated with a delta subunit and one of several sigma factors.

In terms of biological role, participates in both the initiation and recycling phases of transcription. In the presence of the delta subunit, RNAP displays an increased specificity of transcription, a decreased affinity for nucleic acids, and an increased efficiency of RNA synthesis because of enhanced recycling. The sequence is that of Probable DNA-directed RNA polymerase subunit delta from Streptococcus pneumoniae serotype 2 (strain D39 / NCTC 7466).